The chain runs to 185 residues: Ribosome-recycling factor (185 aa).

Belongs to the RRF family.

The protein localises to the cytoplasm. In terms of biological role, responsible for the release of ribosomes from messenger RNA at the termination of protein biosynthesis. May increase the efficiency of translation by recycling ribosomes from one round of translation to another. In Corynebacterium kroppenstedtii (strain DSM 44385 / JCM 11950 / CIP 105744 / CCUG 35717), this protein is Ribosome-recycling factor.